A 91-amino-acid chain; its full sequence is Small ribosomal subunit protein uS17 (91 aa).

This sequence belongs to the universal ribosomal protein uS17 family. As to quaternary structure, part of the 30S ribosomal subunit.

In terms of biological role, one of the primary rRNA binding proteins, it binds specifically to the 5'-end of 16S ribosomal RNA. The protein is Small ribosomal subunit protein uS17 of Salinispora tropica (strain ATCC BAA-916 / DSM 44818 / JCM 13857 / NBRC 105044 / CNB-440).